The primary structure comprises 485 residues: FAD-dependent monooxygenase elcH (485 aa).

The signal sequence occupies residues 1–19 (MFTLRSLAILAVFAATALA). The FAD site is built by Asp59 and Gly73. Asn126, Asn147, and Asn157 each carry an N-linked (GlcNAc...) asparagine glycan.

Belongs to the paxM FAD-dependent monooxygenase family. FAD serves as cofactor.

It participates in secondary metabolite biosynthesis. FAD-dependent monooxygenase; part of the gene cluster that mediates the biosynthesis of elsinochrome C, a perelyenequinone phytotoxin structurally similar to cercosporin. The first step of elsinochrome C biosynthesis is performed by the polyketide synthase elcA which catalyzes the formation of nor-toralactone. The starter unit acyltransferase (SAT) domain of elcA initiates polyketide extension by the selective utilization of acetyl-CoA, which is elongated to the heptaketide in the beta-ketoacyl synthase (KS) domain by successive condensations with six malonyl units introduced by the malonyl acyltransferase (MAT) domain. The product template (PT) domain catalyzes C4-C9 and C2-C11 aldol cyclizations and dehydrations to a trihydroxynaphthalene, which is thought to be delivered to the thioesterase (TE) domain for product release. The bifunctional enzyme elcB then methylates nor-toralactone to toralactone before conducting an unusual oxidative aromatic ring opening. The next step in perylenequinone biosynthesis is an O-methylation at the nascent OH-6 of the elcB product performed by the O-methyltransferase elcD. The oxidative coupling of the two monomeric naphthol units in perylenequinone biosynthesis is catalyzed by the FAD-dependent monooxygenase elcE and the multicopper oxidase elcG. ElcG might catalyze the first intermolecular coupling in a regio- and stereo-selective manner via a phenol radical coupling mechanism and the elcE could forge the second C-C bond intramolecularly via a hydride transfer mechanism. The fasciclin domain-containing protein elcF might also play a role duting this step. The last piece of the puzzle in the biosynthesis of elsinochrome C is the additional annulation by enolate coupling to afford the dihydrobenzo(ghi)perylenequinone system, catalyzed by the FAD-dependent monooxygenase elcH. This chain is FAD-dependent monooxygenase elcH, found in Phaeosphaeria nodorum (strain SN15 / ATCC MYA-4574 / FGSC 10173) (Glume blotch fungus).